The chain runs to 238 residues: Aspirochlorine biosynthesis protein N (238 aa).

It belongs to the asaB hydroxylase/desaturase family.

Its pathway is mycotoxin biosynthesis. Functionally, part of the gene cluster that mediates the biosynthesis of aspirochlorine (or antibiotic A30641), an unusual halogenated spiro compound with distinctive antifungal properties due to selective inhibition of protein biosynthesis, and which is also active against bacteria, viruses, and murine tumor cells. The non-ribosomal peptide synthetase (NRPS) aclP is responsible the formation of the diketopiperazine (DKP) core from the condensation of 2 phenylalanine residues. One Phe residue is tailored into chlorotyrosine by hydroxylation and chlorination, whereas the second Phe undergoes an unprecedented C-C bond cleavage to be converted into glycine. After formation of the DKP, sulfur is incorporated into the DKP by conjugation with glutathione by aclG, followed by its stepwise degradation to the thiol by aclI, aclJ and aclK, and the dithiol oxidation by aclT. In addition, oxygenases (aclB, aclC, aclL and aclO) and O-methyltransferases (aclM and aclU) act as tailoring enzymes to produce the intermediate dechloroaspirochlorine. Ultimately, chlorination of dechloroaspirochlorine by the halogenase aclH is the last step in the aspirochlorine pathway. This is Aspirochlorine biosynthesis protein N from Aspergillus oryzae (strain ATCC 42149 / RIB 40) (Yellow koji mold).